The chain runs to 432 residues: Adenylosuccinate synthetase (432 aa).

Residues 13-19 (GDEGKGK) and 41-43 (GHT) each bind GTP. Residue Asp14 is the Proton acceptor of the active site. Mg(2+) contacts are provided by Asp14 and Gly41. Residues 14-17 (DEGK), 39-42 (NAGH), Thr130, Arg144, Gln225, Thr240, and Arg304 contribute to the IMP site. His42 functions as the Proton donor in the catalytic mechanism. Position 300 to 306 (300 to 306 (ATTGRRR)) interacts with substrate. Residues Arg306, 332-334 (KLD), and 415-417 (STG) contribute to the GTP site.

This sequence belongs to the adenylosuccinate synthetase family. As to quaternary structure, homodimer. It depends on Mg(2+) as a cofactor.

Its subcellular location is the cytoplasm. It catalyses the reaction IMP + L-aspartate + GTP = N(6)-(1,2-dicarboxyethyl)-AMP + GDP + phosphate + 2 H(+). The protein operates within purine metabolism; AMP biosynthesis via de novo pathway; AMP from IMP: step 1/2. Functionally, plays an important role in the de novo pathway of purine nucleotide biosynthesis. Catalyzes the first committed step in the biosynthesis of AMP from IMP. This is Adenylosuccinate synthetase from Baumannia cicadellinicola subsp. Homalodisca coagulata.